We begin with the raw amino-acid sequence, 108 residues long: UPF0060 membrane protein YnfA (108 aa).

Residues 1-5 lie on the Periplasmic side of the membrane; sequence MLKTT. A helical transmembrane segment spans residues 6 to 26; that stretch reads LLFFVTALCEIIGCFLPWLWL. The Cytoplasmic segment spans residues 27 to 30; that stretch reads KRGA. The helical transmembrane segment at 31 to 51 threads the bilayer; the sequence is SVWWLLPAAASLALFVWLLTL. Topologically, residues 52 to 60 are periplasmic; it reads HPAASGRVY. Residues 61-81 traverse the membrane as a helical segment; the sequence is AAYGGVYVCTALLWLRVVDGV. Residues 82-84 are Cytoplasmic-facing; that stretch reads RLT. A helical membrane pass occupies residues 85 to 105; it reads VYDWCGALIALCGMLIIVVGW. Residues 106 to 108 lie on the Periplasmic side of the membrane; sequence GRT.

Belongs to the UPF0060 family.

The protein resides in the cell inner membrane. This chain is UPF0060 membrane protein YnfA, found in Salmonella agona (strain SL483).